The following is a 68-amino-acid chain: Sec-independent protein translocase protein TatA (68 aa).

A helical transmembrane segment spans residues 1-21; it reads MGSFSIWHWLIVLVVVLLLFG. The disordered stretch occupies residues 46-68; that stretch reads EEAASADKTIDGKTVEHKSDEVR. The span at 53–68 shows a compositional bias: basic and acidic residues; that stretch reads KTIDGKTVEHKSDEVR.

Belongs to the TatA/E family. The Tat system comprises two distinct complexes: a TatABC complex, containing multiple copies of TatA, TatB and TatC subunits, and a separate TatA complex, containing only TatA subunits. Substrates initially bind to the TatABC complex, which probably triggers association of the separate TatA complex to form the active translocon.

The protein resides in the cell inner membrane. In terms of biological role, part of the twin-arginine translocation (Tat) system that transports large folded proteins containing a characteristic twin-arginine motif in their signal peptide across membranes. TatA could form the protein-conducting channel of the Tat system. The sequence is that of Sec-independent protein translocase protein TatA from Sinorhizobium fredii (strain NBRC 101917 / NGR234).